We begin with the raw amino-acid sequence, 447 residues long: Argininosuccinate synthase (447 aa).

ATP is bound by residues 17–25 and A43; that span reads AFSGGLDTS. Position 99 (Y99) interacts with L-citrulline. Residues G129 and T131 each contribute to the ATP site. Positions 131, 135, and 136 each coordinate L-aspartate. L-citrulline is bound at residue N135. An ATP-binding site is contributed by D136. L-citrulline-binding residues include R139 and S192. D194 provides a ligand contact to ATP. The L-citrulline site is built by T201, E203, and E280.

This sequence belongs to the argininosuccinate synthase family. Type 2 subfamily. Homotetramer.

The protein resides in the cytoplasm. It carries out the reaction L-citrulline + L-aspartate + ATP = 2-(N(omega)-L-arginino)succinate + AMP + diphosphate + H(+). It functions in the pathway amino-acid biosynthesis; L-arginine biosynthesis; L-arginine from L-ornithine and carbamoyl phosphate: step 2/3. The sequence is that of Argininosuccinate synthase from Shigella flexneri serotype 5b (strain 8401).